The sequence spans 964 residues: Fanconi-associated nuclease 1 homolog (964 aa).

Residues 31–56 (SRSLQDDAADAEREAAAGGSSSGGGD) are disordered. The UBZ4-type zinc-finger motif lies at 63 to 92 (WVACPVCGESIRGTDYCVNTHLDICLTRGT). Positions 66, 69, 83, and 87 each coordinate Zn(2+). Residues glutamate 786, aspartate 907, glutamate 926, and valine 927 each coordinate Mn(2+). In terms of domain architecture, VRR-NUC spans 844–958 (GIAEEILISS…GFDVEVCKVS (115 aa)).

Belongs to the FAN1 family. It depends on Mn(2+) as a cofactor. Requires Mg(2+) as cofactor.

It catalyses the reaction Hydrolytically removes 5'-nucleotides successively from the 3'-hydroxy termini of 3'-hydroxy-terminated oligonucleotides.. Functionally, nuclease required for the repair of DNA interstrand cross-links (ICL). Acts as a 5'-3' exonuclease that anchors at a cut end of DNA and cleaves DNA successively at every third nucleotide, allowing to excise an ICL from one strand through flanking incisions. The chain is Fanconi-associated nuclease 1 homolog from Oryza sativa subsp. japonica (Rice).